A 213-amino-acid polypeptide reads, in one-letter code: Orotate phosphoribosyltransferase (213 aa).

K26 contacts 5-phospho-alpha-D-ribose 1-diphosphate. Orotate is bound at residue F34–F35. Residues Y72–K73, R99, K100, K103, H105, and D124–A132 contribute to the 5-phospho-alpha-D-ribose 1-diphosphate site. The orotate site is built by T128 and R156.

Belongs to the purine/pyrimidine phosphoribosyltransferase family. PyrE subfamily. Homodimer. Requires Mg(2+) as cofactor.

The enzyme catalyses orotidine 5'-phosphate + diphosphate = orotate + 5-phospho-alpha-D-ribose 1-diphosphate. It functions in the pathway pyrimidine metabolism; UMP biosynthesis via de novo pathway; UMP from orotate: step 1/2. Functionally, catalyzes the transfer of a ribosyl phosphate group from 5-phosphoribose 1-diphosphate to orotate, leading to the formation of orotidine monophosphate (OMP). The protein is Orotate phosphoribosyltransferase of Erwinia tasmaniensis (strain DSM 17950 / CFBP 7177 / CIP 109463 / NCPPB 4357 / Et1/99).